The primary structure comprises 126 residues: Glycine--tRNA ligase beta subunit (126 aa).

The protein belongs to the class-II aminoacyl-tRNA synthetase family. As to quaternary structure, tetramer of two alpha and two beta subunits.

The protein resides in the cytoplasm. It catalyses the reaction tRNA(Gly) + glycine + ATP = glycyl-tRNA(Gly) + AMP + diphosphate. In Neisseria gonorrhoeae, this protein is Glycine--tRNA ligase beta subunit (glyS).